The following is a 64-amino-acid chain: Large ribosomal subunit protein bL33 (64 aa).

Basic and acidic residues-rich tracts occupy residues 16-25 (EARTSSDPKR) and 33-42 (TTEKNRRNTT). A disordered region spans residues 16 to 42 (EARTSSDPKRSNGVSRYTTEKNRRNTT).

The protein belongs to the bacterial ribosomal protein bL33 family.

This is Large ribosomal subunit protein bL33 from Prochlorococcus marinus (strain MIT 9301).